Reading from the N-terminus, the 316-residue chain is Pleckstrin homology domain-containing family F member 1 homolog (316 aa).

The PH domain occupies 35–131; it reads VLVGEGVLTK…WMAHINKCVE (97 aa). The FYVE-type zinc-finger motif lies at 152–212; it reads DTDASVCMHC…VCDACYERLK (61 aa). Zn(2+) contacts are provided by Cys158, Cys161, Cys175, Cys178, Cys183, Cys186, Cys204, and Cys207. Residues 215–316 form a disordered region; that stretch reads PSSLGSGEDS…AAVATTGSHC (102 aa). Over residues 244–253 the composition is skewed to acidic residues; that stretch reads SNDEDSDEET. Low complexity predominate over residues 279-292; that stretch reads SSTITSPSSATTGS. Polar residues predominate over residues 298–316; that stretch reads VTPSVQSSPAAVATTGSHC.

In terms of assembly, interacts with Gdi (Rab GDP dissociation inhibitor). As to expression, in ovaries, expressed both in the germ line cells and in the overlying somatic follicular epithelium.

The protein localises to the apical cell membrane. It localises to the endosome membrane. Its subcellular location is the cytoplasm. It is found in the cell cortex. Functionally, functions in the regulation of endosome morphology and late endosome formation. Has a role in controlling trafficking from early to late endosomes and from late endosomes to lysosomes. Important for localization of Gdi to the endosomal membranes. May function in controlling the activity of multiple regulators in the endocytic pathway, perhaps by positively controlling those involved in the early steps of endocytosis such as Rab5 and hrs, and negative regulating those involved in the late stages of endocytosis like car and VhaSFD. The protein is Pleckstrin homology domain-containing family F member 1 homolog of Drosophila melanogaster (Fruit fly).